The primary structure comprises 144 residues: Large ribosomal subunit protein uL15 (144 aa).

The span at 1-16 (MVVRKEKKSRKYRGYR) shows a compositional bias: basic residues. The interval 1–35 (MVVRKEKKSRKYRGYRTHGWGTKGQHRDRGAQGGR) is disordered.

The protein belongs to the universal ribosomal protein uL15 family. Part of the 50S ribosomal subunit.

Its function is as follows. Binds to the 23S rRNA. The polypeptide is Large ribosomal subunit protein uL15 (Sulfolobus acidocaldarius (strain ATCC 33909 / DSM 639 / JCM 8929 / NBRC 15157 / NCIMB 11770)).